A 291-amino-acid polypeptide reads, in one-letter code: MTQAVLGIIGGSGIYDLPGLEGAHEEVIKSPWGEPSAPLRRGTIAGLPIVFLPRHDKGHRLSPSDINYRANIDVLKRAGVTDLISLSACGSFKEEMPPGTFVLVDQFVDRTHKRESSFFGRGCVAHVSMAHPVSPRLRIHLAAAAEAEGIAIARGGTYVCMEGPQFSTYAESMTYKTSGYSVIGMTNMPEAKLAREAEICYATVAMVTDFDCWHPDHDAVTVQDIIRVLTSNADKAKALVARLAKDFPREHEPCPIGSDRALDTALITAPEARDPELLKKLDAVAGRVLRG.

Residues S12, 54-55 (RH), and 87-88 (SA) contribute to the phosphate site. A substrate-binding site is contributed by M185. Residue T186 coordinates phosphate. Residue 209-211 (DFD) coordinates substrate.

The protein belongs to the PNP/MTAP phosphorylase family. MTAP subfamily. In terms of assembly, homohexamer. Dimer of a homotrimer.

It carries out the reaction S-methyl-5'-thioadenosine + phosphate = 5-(methylsulfanyl)-alpha-D-ribose 1-phosphate + adenine. Its pathway is amino-acid biosynthesis; L-methionine biosynthesis via salvage pathway; S-methyl-5-thio-alpha-D-ribose 1-phosphate from S-methyl-5'-thioadenosine (phosphorylase route): step 1/1. Functionally, catalyzes the reversible phosphorylation of S-methyl-5'-thioadenosine (MTA) to adenine and 5-methylthioribose-1-phosphate. Involved in the breakdown of MTA, a major by-product of polyamine biosynthesis. Responsible for the first step in the methionine salvage pathway after MTA has been generated from S-adenosylmethionine. Has broad substrate specificity with 6-aminopurine nucleosides as preferred substrates. The protein is S-methyl-5'-thioadenosine phosphorylase of Bradyrhizobium diazoefficiens (strain JCM 10833 / BCRC 13528 / IAM 13628 / NBRC 14792 / USDA 110).